Reading from the N-terminus, the 295-residue chain is Light-independent protochlorophyllide reductase iron-sulfur ATP-binding protein (295 aa).

ATP-binding positions include 39-44 and lysine 68; that span reads GIGKST. Serine 43 serves as a coordination point for Mg(2+). [4Fe-4S] cluster-binding residues include cysteine 124 and cysteine 158. ATP is bound at residue 209–210; it reads NR.

The protein belongs to the NifH/BchL/ChlL family. In terms of assembly, homodimer. Protochlorophyllide reductase is composed of three subunits; ChlL, ChlN and ChlB. It depends on [4Fe-4S] cluster as a cofactor.

It catalyses the reaction chlorophyllide a + oxidized 2[4Fe-4S]-[ferredoxin] + 2 ADP + 2 phosphate = protochlorophyllide a + reduced 2[4Fe-4S]-[ferredoxin] + 2 ATP + 2 H2O. It participates in porphyrin-containing compound metabolism; chlorophyll biosynthesis (light-independent). Functionally, component of the dark-operative protochlorophyllide reductase (DPOR) that uses Mg-ATP and reduced ferredoxin to reduce ring D of protochlorophyllide (Pchlide) to form chlorophyllide a (Chlide). This reaction is light-independent. The L component serves as a unique electron donor to the NB-component of the complex, and binds Mg-ATP. This Prochlorococcus marinus (strain MIT 9515) protein is Light-independent protochlorophyllide reductase iron-sulfur ATP-binding protein.